A 175-amino-acid polypeptide reads, in one-letter code: Replication restart protein PriC (175 aa).

This sequence belongs to the PriC family. In terms of assembly, monomer. Oligomerizes in the absence of DNA. Component of the replication restart primosome, which is composed of PriA, PriB, PriC, DnaB and DnaT; DnaG primase associates transiently with this complex. Interacts with the C-terminus of SSB; this interaction is required for DnaB loading onto substrate replication forks. Interacts with DnaB alone and in the DnaB-DnaC complex, probably 1:1 binding with DnaB.

Involved in the restart of stalled replication forks, which reloads the replicative helicase (DnaB) on sites other than the origin of replication. Recognizes abandoned replication forks and remodels DNA single-stranded binding protein (SSB) on ssDNA to uncover a loading site for DnaB. There are several restart pathways, the PriA-PriC pathway is a minor restart pathway. Also part of the minor PriC-Rep pathway for restart of stalled replication forks, which has a different substrate specificity than PriA. priB and priC have redundant roles in the cell. Stimulates the 3'-5' helicase activity of Rep helicase in vitro. In vitro can load the DnaB replicative helicase from a DnaB-DnaC complex on an SSB-coated stalled replication fork with no leading- or lagging-strand (or with a gap between the leading strand and fork junction) in the absence of other primosome proteins (PriA, PriB or DnaT). Also part of the major restart pathway with PriA, PriB, DnaB, DnaT and DnaG primase. PriC may contribute to the stability of the preprimosome complex. Preferentially binds approximately 7-9 nucleotides of single-stranded (ss)DNA, also binds double-stranded (ds)DNA. PriB is probably more important in the cell than PriC. The chain is Replication restart protein PriC from Escherichia coli (strain K12).